A 451-amino-acid chain; its full sequence is Bifunctional protein GlmU (451 aa).

A pyrophosphorylase region spans residues 1 to 226 (MVAVAILAAG…YLEISGINDR (226 aa)). UDP-N-acetyl-alpha-D-glucosamine is bound by residues 7–10 (LAAG), Lys21, Gln73, and 78–79 (GT). Asp103 contacts Mg(2+). Gly140, Glu155, Asn170, and Asn224 together coordinate UDP-N-acetyl-alpha-D-glucosamine. Asn224 is a binding site for Mg(2+). The linker stretch occupies residues 227–247 (KQLATAYDILQNRIKDYWMRA). Residues 248–451 (GVTLIDPDSI…ISGWRMKTDD (204 aa)) form an N-acetyltransferase region. UDP-N-acetyl-alpha-D-glucosamine-binding residues include Arg329 and Lys347. The active-site Proton acceptor is the His359. 2 residues coordinate UDP-N-acetyl-alpha-D-glucosamine: Tyr362 and Asn373. Acetyl-CoA contacts are provided by residues Ala376, 382-383 (NY), Ala419, and Arg436.

In the N-terminal section; belongs to the N-acetylglucosamine-1-phosphate uridyltransferase family. It in the C-terminal section; belongs to the transferase hexapeptide repeat family. As to quaternary structure, homotrimer. The cofactor is Mg(2+).

It is found in the cytoplasm. The enzyme catalyses alpha-D-glucosamine 1-phosphate + acetyl-CoA = N-acetyl-alpha-D-glucosamine 1-phosphate + CoA + H(+). It catalyses the reaction N-acetyl-alpha-D-glucosamine 1-phosphate + UTP + H(+) = UDP-N-acetyl-alpha-D-glucosamine + diphosphate. It functions in the pathway nucleotide-sugar biosynthesis; UDP-N-acetyl-alpha-D-glucosamine biosynthesis; N-acetyl-alpha-D-glucosamine 1-phosphate from alpha-D-glucosamine 6-phosphate (route II): step 2/2. Its pathway is nucleotide-sugar biosynthesis; UDP-N-acetyl-alpha-D-glucosamine biosynthesis; UDP-N-acetyl-alpha-D-glucosamine from N-acetyl-alpha-D-glucosamine 1-phosphate: step 1/1. It participates in bacterial outer membrane biogenesis; LPS lipid A biosynthesis. In terms of biological role, catalyzes the last two sequential reactions in the de novo biosynthetic pathway for UDP-N-acetylglucosamine (UDP-GlcNAc). The C-terminal domain catalyzes the transfer of acetyl group from acetyl coenzyme A to glucosamine-1-phosphate (GlcN-1-P) to produce N-acetylglucosamine-1-phosphate (GlcNAc-1-P), which is converted into UDP-GlcNAc by the transfer of uridine 5-monophosphate (from uridine 5-triphosphate), a reaction catalyzed by the N-terminal domain. In Gloeothece citriformis (strain PCC 7424) (Cyanothece sp. (strain PCC 7424)), this protein is Bifunctional protein GlmU.